A 181-amino-acid chain; its full sequence is Acireductone dioxygenase (181 aa).

4 residues coordinate Fe(2+): histidine 97, histidine 99, glutamate 103, and histidine 141. Residues histidine 97, histidine 99, glutamate 103, and histidine 141 each contribute to the Ni(2+) site.

The protein belongs to the acireductone dioxygenase (ARD) family. Monomer. The cofactor is Fe(2+). Ni(2+) is required as a cofactor.

It carries out the reaction 1,2-dihydroxy-5-(methylsulfanyl)pent-1-en-3-one + O2 = 3-(methylsulfanyl)propanoate + CO + formate + 2 H(+). The enzyme catalyses 1,2-dihydroxy-5-(methylsulfanyl)pent-1-en-3-one + O2 = 4-methylsulfanyl-2-oxobutanoate + formate + 2 H(+). The protein operates within amino-acid biosynthesis; L-methionine biosynthesis via salvage pathway; L-methionine from S-methyl-5-thio-alpha-D-ribose 1-phosphate: step 5/6. In terms of biological role, catalyzes 2 different reactions between oxygen and the acireductone 1,2-dihydroxy-3-keto-5-methylthiopentene (DHK-MTPene) depending upon the metal bound in the active site. Fe-containing acireductone dioxygenase (Fe-ARD) produces formate and 2-keto-4-methylthiobutyrate (KMTB), the alpha-ketoacid precursor of methionine in the methionine recycle pathway. Ni-containing acireductone dioxygenase (Ni-ARD) produces methylthiopropionate, carbon monoxide and formate, and does not lie on the methionine recycle pathway. The protein is Acireductone dioxygenase of Pseudomonas syringae pv. tomato (strain ATCC BAA-871 / DC3000).